We begin with the raw amino-acid sequence, 612 residues long: MALVSVAPLASRSCLSKSLISSTHELKPLRRTILPTLRWKSATPSINMCLTTSNSVDAVQRRIANHHSNLWDDDFIQSLSTPYEAPSYRERAERLIGEVKEMFESMGPNNDLLQRLSMVESVERLGIDRHFKNEIKSALDYVYSHWNEKGIGCGRDSVVSDLNSTALALRTLRLHGYPVSSDVLEHFKDQKGRFACSSIKTEGEIRSLLNLFRASLVAFPNEKVMEEAEIFSTTYLKEAVQKIPVSSLSRQIEYNMEYGWHTNLPRLEARNYMGDMIHEMPYMNAEKLLELAKLEFNIFHSLQERELKHLSRWWKDSGFSQLTFVRHRHVEYYTLASCIDIDPKHSAFRLGFAKMCHLITVLDDIYDTFGTMDELKLFTAAIKRWDPSATEWLPEYMKGVYMVVYETVNEMAGEAKKSQGRDTINYSRQAWEAYIDSYMKEAEWISSGCLPTFEEYYENGKVSFGYQISVLQPILTLDVPLPHHILQEIIFPSRFNGLASGILRLKGDTRCYQADRARGEEASCISCYMNDNPGATEEDALNHINAMVNELMKEFNWELLKPDNNVPVSSKKHAFDITRVVHHGYKYRDGYSVANNEIKNLVITTVLEPVPL.

Residues 1-52 constitute a chloroplast transit peptide; that stretch reads MALVSVAPLASRSCLSKSLISSTHELKPLRRTILPTLRWKSATPSINMCLTT. Positions 363, 367, and 515 each coordinate Mg(2+). A DDXXD motif motif is present at residues 363–367; that stretch reads DDIYD.

The protein belongs to the terpene synthase family. Tpsd subfamily. Requires Mg(2+) as cofactor. The cofactor is Mn(2+).

It localises to the plastid. It is found in the chloroplast. It catalyses the reaction (2E)-geranyl diphosphate + H2O = 1,8-cineole + diphosphate. It participates in terpene metabolism; oleoresin biosynthesis. Functionally, terpene synthase (TPS) involved in the biosynthesis of monoterpene natural products included in conifer oleoresin secretions and volatile emissions; these compounds contribute to biotic and abiotic stress defense against herbivores and pathogens. Catalyzes the conversion of (2E)-geranyl diphosphate (GPP) to 1,8-cineole. The chain is 1,8-cineole synthase, chloroplastic from Picea sitchensis (Sitka spruce).